The sequence spans 185 residues: Ribosome-recycling factor (185 aa).

It belongs to the RRF family.

The protein resides in the cytoplasm. In terms of biological role, responsible for the release of ribosomes from messenger RNA at the termination of protein biosynthesis. May increase the efficiency of translation by recycling ribosomes from one round of translation to another. This Shewanella pealeana (strain ATCC 700345 / ANG-SQ1) protein is Ribosome-recycling factor.